We begin with the raw amino-acid sequence, 364 residues long: Apelin receptor (364 aa).

Residues 1–39 (MATDEFSSSTTPSYDYYDYTNESGLPPCDETDWDLSYSL) are Extracellular-facing. N21 carries N-linked (GlcNAc...) asparagine glycosylation. Cystine bridges form between C28–C288 and C110–C187. Residues 40 to 60 (LPVFYMIVFVLGLSGNGVVIF) form a helical membrane-spanning segment. The Cytoplasmic segment spans residues 61-78 (TVWKAKPKRRSADTYIGN). A helical membrane pass occupies residues 79-99 (LALADLAFVVTLPLWATYTAL). The Extracellular portion of the chain corresponds to 100–112 (GFHWPFGSALCKL). Residues 113–133 (SSYLVLLNMFASVFCLTCLSF) form a helical membrane-spanning segment. The Cytoplasmic segment spans residues 134–153 (DRYLAIVHSLSSAKLRSRSS). Residues 154-174 (ILVSLAVIWLFSGLLALPSLI) form a helical membrane-spanning segment. Residues 175–201 (LRDTRVEGNNTICDLDFSGVSSKENEN) lie on the Extracellular side of the membrane. N183 carries N-linked (GlcNAc...) asparagine glycosylation. A helical membrane pass occupies residues 202-222 (FWIGGLSILTTVPGFLLPLLL). Topologically, residues 223–250 (MTIFYCFIGGKVTMHFQNLKKEEQKKKR) are cytoplasmic. Residues 251–271 (LLKIIITLVVVFAICWLPFHI) traverse the membrane as a helical segment. Topologically, residues 272 to 298 (LKTIHFLDLMGFLELSCSTQNIIVSLH) are extracellular. Residues 299–319 (PYATCLAYINSCLNPFLYAFF) form a helical membrane-spanning segment. At 320–364 (DLRFRSQCFFFFGFKKALQGHLSNTSSSLSAQTQKSEIHSLATKV) the chain is on the cytoplasmic side.

Belongs to the G-protein coupled receptor 1 family.

The protein localises to the cell membrane. Its function is as follows. G protein-coupled receptor for peptide hormones apelin (apln) and apelin receptor early endogenous ligand (apela), that plays a role in the regulation of normal cardiovascular function and fluid homeostasis. When acting as apelin receptor, activates both G(i) protein pathway that inhibits adenylate cyclase activity, and the beta-arrestin pathway that promotes internalization of the receptor. Also functions as mechanoreceptor that is activated by pathological stimuli in a G-protein-independent fashion to induce beta-arrestin signaling, hence eliciting cardiac hypertrophy. However, the presence of apelin ligand blunts cardiac hypertrophic induction from APLNR/APJ on response to pathological stimuli. Plays a key role in early development such as gastrulation, blood vessels formation and heart morphogenesis by acting as a receptor for apela hormone, promoting endoderm and mesendoderm cell migration and regulating the migration of cells fated to become myocardial progenitors, respectively. Promotes angioblast migration toward the embryonic midline, i.e. the position of the future vessel formation, during vasculogenesis. May promote sinus venosus (SV)-derived endothelial cells migration into the developing heart to promote coronary blood vessel development. Required for cardiovascular development, particularly for intersomitic vein angiogenesis. Plays also a role in various processes in adults such as regulation of blood vessel formation, blood pressure, heart contractility, and heart failure. Acts upstream of the i/o type of G-alpha proteins in the differentiation of endothelium, erythroid cells, myeloid cells and cardiomyocytes. This chain is Apelin receptor (aplnr), found in Xenopus tropicalis (Western clawed frog).